Reading from the N-terminus, the 29-residue chain is Frontoxin VI (29 aa).

C3 and C24 are oxidised to a cystine.

In terms of tissue distribution, expressed by the venom gland.

The protein resides in the secreted. Binds to muscle nicotinic acetylcholine receptor (nAChR) and inhibit acetylcholine from binding to the receptor, thereby impairing neuromuscular transmission. The chain is Frontoxin VI from Micrurus frontalis (Coral snake).